The primary structure comprises 30 residues: Sperm protamine P5 (30 aa).

The segment at 1 to 30 is disordered; sequence YRRRRRRGRRGRRRRGRRRRSRGRRRAHGG.

As to expression, testis.

Its subcellular location is the nucleus. It is found in the chromosome. In terms of biological role, protamines substitute for histones in the chromatin of sperm during the haploid phase of spermatogenesis. They compact sperm DNA into a highly condensed, stable and inactive complex. The sequence is that of Sperm protamine P5 from Octopus vulgaris (Common octopus).